Consider the following 995-residue polypeptide: Aconitate hydratase 2, mitochondrial (995 aa).

The N-terminal 83 residues, 1–83 (MYRRATSGVR…PASLRAQARN (83 aa)), are a transit peptide targeting the mitochondrion. Substrate is bound by residues Q187 and 306–308 (DSH). Positions 538, 604, and 607 each coordinate [4Fe-4S] cluster. Residues R637, R642, R800, and 881–882 (SR) each bind substrate.

The protein belongs to the aconitase/IPM isomerase family. As to quaternary structure, monomer. Requires [4Fe-4S] cluster as cofactor. In terms of tissue distribution, mostly expressed in roots, leaves and flowers, also present in stems, and, at low levels, in seeds.

It localises to the mitochondrion. It carries out the reaction citrate = D-threo-isocitrate. It participates in carbohydrate metabolism; tricarboxylic acid cycle; isocitrate from oxaloacetate: step 2/2. Its function is as follows. Catalyzes the isomerization of citrate to isocitrate via cis-aconitate. Contributes to oxidative stress tolerance. Involved in acetate assimilation. This Arabidopsis thaliana (Mouse-ear cress) protein is Aconitate hydratase 2, mitochondrial.